The primary structure comprises 710 residues: Zinc finger and BTB domain-containing protein 24 (710 aa).

A BTB domain is found at 37 to 103; that stretch reads CDITLIVENV…IYTGYLHASE (67 aa). 2 disordered regions span residues 134-176 and 202-256; these read APKP…EGRS and EEDS…SRRR. A DNA-binding region (a.T hook) is located at residues 159 to 171; it reads KRKRGRPRKANGL. Basic and acidic residues-rich tracts occupy residues 202–219 and 231–244; these read EEDS…KESE and PAEK…KAGD. C2H2-type zinc fingers lie at residues 293–315, 321–343, 349–371, 377–399, 405–427, 433–455, 461–483, and 489–511; these read ARCK…QRRH, FKCN…TRMH, YTCT…MSLH, FTCD…YRVH, PECS…LRTH, FTCE…IRIH, YSCS…CILH, and FSCP…LKIH. The disordered stretch occupies residues 651-676; that stretch reads EQTTSSVPAADTGARATPVPSTRPGA.

It belongs to the krueppel C2H2-type zinc-finger protein family. As to quaternary structure, interacts with MN1. In terms of tissue distribution, widely expressed. Highest level in liver, testis and kidney.

It localises to the nucleus. Its function is as follows. May be involved in BMP2-induced transcription. This is Zinc finger and BTB domain-containing protein 24 (Zbtb24) from Mus musculus (Mouse).